We begin with the raw amino-acid sequence, 596 residues long: Aspartic proteinase MKC7 (596 aa).

Residues 1–22 (MKLSVLTFVVDALLVCSSIVDA) form the signal peptide. Positions 23-65 (GVTDFPSLPSNEVYVKMNFQKKYGSSFENALDDTKGRTRLMTR) are excised as a propeptide. One can recognise a Peptidase A1 domain in the interval 81–468 (YSVELDIGTP…DLDNMEISMA (388 aa)). The active site involves Asp99. N-linked (GlcNAc...) asparagine glycosylation is found at Asn180, Asn190, Asn219, Asn229, Asn232, Asn286, and Asn346. Residue Asp360 is part of the active site. 2 N-linked (GlcNAc...) asparagine glycosylation sites follow: Asn471 and Asn517. Over residues 530 to 570 (ATSSSSSKGQKTQTSTTALSISKSTSSTSSTGMLSPTSSSS) the composition is skewed to low complexity. The interval 530–578 (ATSSSSSKGQKTQTSTTALSISKSTSSTSSTGMLSPTSSSSTRKENGGH) is disordered. Asn575 carries the GPI-anchor amidated asparagine lipid modification. Residues 576-596 (GGHNLNPPFFARFITAIFHHI) constitute a propeptide, removed in mature form.

It belongs to the peptidase A1 family.

It is found in the cell membrane. The catalysed reaction is Hydrolyzes various precursor proteins with Arg or Lys in P1, and commonly Arg or Lys also in P2. The P3 amino acid is usually non-polar, but otherwise additional basic amino acids are favorable in both non-prime and prime positions.. Functionally, cleaves proteins C-terminally to the most C-terminal basic residue. Can process the alpha-mating factor precursor. Required for cell wall integrity. In Saccharomyces cerevisiae (strain ATCC 204508 / S288c) (Baker's yeast), this protein is Aspartic proteinase MKC7 (MKC7).